The chain runs to 79 residues: Dolichyl-diphosphooligosaccharide--protein glycosyltransferase subunit TMEM258 (79 aa).

Transmembrane regions (helical) follow at residues 17–37 (VFPH…AWFF) and 59–79 (VASL…GIFV).

Belongs to the OST5 family. Component of the oligosaccharyltransferase (OST) complex.

Its subcellular location is the membrane. The protein localises to the endoplasmic reticulum. The protein resides in the cytoplasm. Its pathway is protein modification; protein glycosylation. Functionally, subunit of the oligosaccharyl transferase (OST) complex that catalyzes the initial transfer of a defined glycan (Glc(3)Man(9)GlcNAc(2) in eukaryotes) from the lipid carrier dolichol-pyrophosphate to an asparagine residue within an Asn-X-Ser/Thr consensus motif in nascent polypeptide chains, the first step in protein N-glycosylation. N-glycosylation occurs cotranslationally and the complex associates with the Sec61 complex at the channel-forming translocon complex that mediates protein translocation across the endoplasmic reticulum (ER). All subunits are required for a maximal enzyme activity. The polypeptide is Dolichyl-diphosphooligosaccharide--protein glycosyltransferase subunit TMEM258 (Danio rerio (Zebrafish)).